Reading from the N-terminus, the 511-residue chain is Phospho-2-dehydro-3-deoxyheptonate aldolase 2, chloroplastic (511 aa).

The protein belongs to the class-II DAHP synthase family. Leaves, stems, tuber and roots.

It localises to the plastid. It is found in the chloroplast. It carries out the reaction D-erythrose 4-phosphate + phosphoenolpyruvate + H2O = 7-phospho-2-dehydro-3-deoxy-D-arabino-heptonate + phosphate. Its pathway is metabolic intermediate biosynthesis; chorismate biosynthesis; chorismate from D-erythrose 4-phosphate and phosphoenolpyruvate: step 1/7. In Solanum tuberosum (Potato), this protein is Phospho-2-dehydro-3-deoxyheptonate aldolase 2, chloroplastic (SHKB).